The following is a 360-amino-acid chain: Photosystem II protein D1 2 (360 aa).

3 consecutive transmembrane segments (helical) span residues 29–46 (YIGW…AATT), 118–133 (HFLT…EWEL), and 142–156 (WICL…AATA). Residue histidine 118 participates in chlorophyll a binding. Tyrosine 126 serves as a coordination point for pheophytin a. [CaMn4O5] cluster-binding residues include aspartate 170 and glutamate 189. Residues 197-218 (FHMLGVAGVFGGSLFSAMHGSL) form a helical membrane-spanning segment. Histidine 198 is a chlorophyll a binding site. Residues histidine 215 and 264-265 (SF) each bind a quinone. Fe cation is bound at residue histidine 215. Histidine 272 contacts Fe cation. A helical transmembrane segment spans residues 274–288 (FLAAWPVIGIWFTAL). [CaMn4O5] cluster is bound by residues histidine 332, glutamate 333, aspartate 342, and alanine 344. The propeptide occupies 345 to 360 (AGEVAPVALTAPAING).

This sequence belongs to the reaction center PufL/M/PsbA/D family. In terms of assembly, PSII is composed of 1 copy each of membrane proteins PsbA, PsbB, PsbC, PsbD, PsbE, PsbF, PsbH, PsbI, PsbJ, PsbK, PsbL, PsbM, PsbT, PsbX, PsbY, PsbZ, Psb30/Ycf12, peripheral proteins PsbO, CyanoQ (PsbQ), PsbU, PsbV and a large number of cofactors. It forms dimeric complexes. The D1/D2 heterodimer binds P680, chlorophylls that are the primary electron donor of PSII, and subsequent electron acceptors. It shares a non-heme iron and each subunit binds pheophytin, quinone, additional chlorophylls, carotenoids and lipids. D1 provides most of the ligands for the Mn4-Ca-O5 cluster of the oxygen-evolving complex (OEC). There is also a Cl(-1) ion associated with D1 and D2, which is required for oxygen evolution. The PSII complex binds additional chlorophylls, carotenoids and specific lipids. is required as a cofactor. In terms of processing, tyr-161 forms a radical intermediate that is referred to as redox-active TyrZ, YZ or Y-Z. C-terminally processed by CtpA; processing is essential to allow assembly of the oxygen-evolving complex and thus photosynthetic growth.

It localises to the cellular thylakoid membrane. The catalysed reaction is 2 a plastoquinone + 4 hnu + 2 H2O = 2 a plastoquinol + O2. Its function is as follows. Photosystem II (PSII) is a light-driven water:plastoquinone oxidoreductase that uses light energy to abstract electrons from H(2)O, generating O(2) and a proton gradient subsequently used for ATP formation. It consists of a core antenna complex that captures photons, and an electron transfer chain that converts photonic excitation into a charge separation. The D1/D2 (PsbA/PsbD) reaction center heterodimer binds P680, the primary electron donor of PSII as well as several subsequent electron acceptors. This is Photosystem II protein D1 2 from Trichormus variabilis (strain ATCC 29413 / PCC 7937) (Anabaena variabilis).